Here is a 150-residue protein sequence, read N- to C-terminus: Large ribosomal subunit protein bL9 (150 aa).

It belongs to the bacterial ribosomal protein bL9 family.

Its function is as follows. Binds to the 23S rRNA. This Yersinia pseudotuberculosis serotype I (strain IP32953) protein is Large ribosomal subunit protein bL9.